Consider the following 472-residue polypeptide: Pyruvate kinase (472 aa).

Arg-33 is a substrate binding site. K(+) contacts are provided by Asn-35, Ser-37, and Asp-67. 35–38 (NFSH) contributes to the ATP binding site. ATP contacts are provided by Arg-74 and Lys-155. Glu-220 lines the Mg(2+) pocket. Positions 243, 244, and 276 each coordinate substrate. Residue Asp-244 participates in Mg(2+) binding.

Belongs to the pyruvate kinase family. As to quaternary structure, homotetramer. Mg(2+) is required as a cofactor. Requires K(+) as cofactor.

The enzyme catalyses pyruvate + ATP = phosphoenolpyruvate + ADP + H(+). It functions in the pathway carbohydrate degradation; glycolysis; pyruvate from D-glyceraldehyde 3-phosphate: step 5/5. The chain is Pyruvate kinase (pyk) from Mycobacterium tuberculosis (strain CDC 1551 / Oshkosh).